Consider the following 666-residue polypeptide: NAD(P)H-quinone oxidoreductase subunit 5, organellar chromatophore 1 (666 aa).

Helical transmembrane passes span 8 to 28 (LVWLIPILPFIGAFLVGFGLI), 41 to 61 (AALLLISSVGISAVLSFMVLA), 90 to 110 (VDPIGATMLALVSTVAILVMV), 121 to 141 (SYVRFFTYLGLFTSSMLALIL), 145 to 165 (LLEIYVFWELVGMCSYLLIGF), 190 to 210 (FLLGILGLFWATNSFDFQIVA), 220 to 240 (GSIPHWAAIALCLLLFMGPMA), 259 to 279 (TPISALIHAATMVAAGVFLVA), 293 to 313 (IIVAVIGTITCFLGASIALIQ), 328 to 348 (LGYMMLAMGCGAPVAGMFHLI), 396 to 416 (GITFFIGCVAISGIPPLAGFW), 428 to 448 (SYPLLWGVGLFTAGLTAFYMF), 497 to 517 (TLPLVILSVPSVLIGFLGSPW), 542 to 562 (FLPLAIASVMISTCGIVIATI), and 643 to 663 (GRPQFYALIIFGGVISLIVIF).

The protein belongs to the complex I subunit 5 family. In terms of assembly, NDH is composed of at least 16 different subunits, 5 of which are encoded in the nucleus.

It is found in the plastid. Its subcellular location is the organellar chromatophore thylakoid membrane. The enzyme catalyses a plastoquinone + NADH + (n+1) H(+)(in) = a plastoquinol + NAD(+) + n H(+)(out). It carries out the reaction a plastoquinone + NADPH + (n+1) H(+)(in) = a plastoquinol + NADP(+) + n H(+)(out). In terms of biological role, NDH shuttles electrons from NAD(P)H:plastoquinone, via FMN and iron-sulfur (Fe-S) centers, to quinones in the photosynthetic chain and possibly in a chloroplast respiratory chain. The immediate electron acceptor for the enzyme in this species is believed to be plastoquinone. Couples the redox reaction to proton translocation, and thus conserves the redox energy in a proton gradient. This chain is NAD(P)H-quinone oxidoreductase subunit 5, organellar chromatophore 1 (ndhF1), found in Paulinella chromatophora.